Reading from the N-terminus, the 114-residue chain is Large ribosomal subunit protein uL18 (114 aa).

It belongs to the universal ribosomal protein uL18 family. In terms of assembly, part of the 50S ribosomal subunit; part of the 5S rRNA/L5/L18/L25 subcomplex. Contacts the 5S and 23S rRNAs.

Functionally, this is one of the proteins that bind and probably mediate the attachment of the 5S RNA into the large ribosomal subunit, where it forms part of the central protuberance. The polypeptide is Large ribosomal subunit protein uL18 (Aster yellows phytoplasma).